Here is a 589-residue protein sequence, read N- to C-terminus: Monocopper oxidase-like protein SKS1 (589 aa).

A signal peptide spans 1–24 (MAATCSLLASFLLCFALLSAVSFA). Asparagine 62, asparagine 111, asparagine 204, asparagine 243, asparagine 260, asparagine 296, asparagine 345, asparagine 365, asparagine 433, and asparagine 447 each carry an N-linked (GlcNAc...) asparagine glycan. The tract at residues 322–356 (LPVPKTDVSSPWSAMSQPKTIRQNTSASGARPNPQ) is disordered. Residues 328 to 349 (DVSSPWSAMSQPKTIRQNTSAS) are compositionally biased toward polar residues. Histidine 455 lines the Cu cation pocket. Serine 563 carries GPI-anchor amidated serine lipidation. A propeptide spans 564-589 (AATSILNGHLKLMLLMVLLASVFRFC) (removed in mature form).

It belongs to the multicopper oxidase family. Cu cation is required as a cofactor.

The protein resides in the cell membrane. This chain is Monocopper oxidase-like protein SKS1 (SKS1), found in Arabidopsis thaliana (Mouse-ear cress).